The chain runs to 111 residues: Nucleoid-associated protein lhv_0401 (111 aa).

The protein belongs to the YbaB/EbfC family. As to quaternary structure, homodimer.

The protein localises to the cytoplasm. It is found in the nucleoid. Functionally, binds to DNA and alters its conformation. May be involved in regulation of gene expression, nucleoid organization and DNA protection. This is Nucleoid-associated protein lhv_0401 from Lactobacillus helveticus (strain DPC 4571).